Consider the following 146-residue polypeptide: U-scoloptoxin(16)-Er1a (146 aa).

The N-terminal stretch at 1–26 (MNTVSVVQFLAVGCAVFVLYGRGVFA) is a signal peptide.

It belongs to the scoloptoxin-16 family. In terms of processing, contains 4 disulfide bonds. As to expression, expressed by the venom gland.

Its subcellular location is the secreted. The chain is U-scoloptoxin(16)-Er1a from Ethmostigmus rubripes (Giant centipede).